A 310-amino-acid polypeptide reads, in one-letter code: Probable endonuclease 4 (310 aa).

The tract at residues 1–31 (MNNQQSRGALGTSGATPDLPDATPGLSRNPV) is disordered. 9 residues coordinate Zn(2+): His-94, His-134, Glu-173, Asp-207, His-210, His-244, Asp-257, His-259, and Glu-289.

This sequence belongs to the AP endonuclease 2 family. Requires Zn(2+) as cofactor.

It catalyses the reaction Endonucleolytic cleavage to 5'-phosphooligonucleotide end-products.. Functionally, endonuclease IV plays a role in DNA repair. It cleaves phosphodiester bonds at apurinic or apyrimidinic (AP) sites, generating a 3'-hydroxyl group and a 5'-terminal sugar phosphate. This Streptomyces avermitilis (strain ATCC 31267 / DSM 46492 / JCM 5070 / NBRC 14893 / NCIMB 12804 / NRRL 8165 / MA-4680) protein is Probable endonuclease 4.